The following is an 807-amino-acid chain: Phenylalanine--tRNA ligase beta subunit (807 aa).

Residues 39–153 form the tRNA-binding domain; it reads SARSQGVVVG…EIPAVGTPVA (115 aa). A B5 domain is found at 407-491; sequence RTPVPLQLRR…RLVGFDKFGS (85 aa). Mg(2+) contacts are provided by Asp469, Asp475, Glu478, and Glu479. The 94-residue stretch at 713–806 folds into the FDX-ACB domain; sequence PTVPASERDL…LSKQFKAELR (94 aa).

This sequence belongs to the phenylalanyl-tRNA synthetase beta subunit family. Type 1 subfamily. Tetramer of two alpha and two beta subunits. Requires Mg(2+) as cofactor.

It is found in the cytoplasm. The enzyme catalyses tRNA(Phe) + L-phenylalanine + ATP = L-phenylalanyl-tRNA(Phe) + AMP + diphosphate + H(+). This Synechococcus sp. (strain CC9902) protein is Phenylalanine--tRNA ligase beta subunit.